The primary structure comprises 328 residues: Phenylalanine--tRNA ligase alpha subunit (328 aa).

A Mg(2+)-binding site is contributed by glutamate 245.

This sequence belongs to the class-II aminoacyl-tRNA synthetase family. Phe-tRNA synthetase alpha subunit type 1 subfamily. As to quaternary structure, tetramer of two alpha and two beta subunits. Requires Mg(2+) as cofactor.

It localises to the cytoplasm. It catalyses the reaction tRNA(Phe) + L-phenylalanine + ATP = L-phenylalanyl-tRNA(Phe) + AMP + diphosphate + H(+). This is Phenylalanine--tRNA ligase alpha subunit from Helicobacter pylori (strain P12).